The chain runs to 131 residues: Small ribosomal subunit protein uS8 (131 aa).

This sequence belongs to the universal ribosomal protein uS8 family. As to quaternary structure, part of the 30S ribosomal subunit. Contacts proteins S5 and S12.

Its function is as follows. One of the primary rRNA binding proteins, it binds directly to 16S rRNA central domain where it helps coordinate assembly of the platform of the 30S subunit. The protein is Small ribosomal subunit protein uS8 of Mycoplasmopsis agalactiae (strain NCTC 10123 / CIP 59.7 / PG2) (Mycoplasma agalactiae).